We begin with the raw amino-acid sequence, 430 residues long: Adenylosuccinate synthetase (430 aa).

GTP-binding positions include 13–19 (GDEGKGK) and 41–43 (GHT). Aspartate 14 functions as the Proton acceptor in the catalytic mechanism. Mg(2+) is bound by residues aspartate 14 and glycine 41. IMP-binding positions include 14–17 (DEGK), 39–42 (NAGH), threonine 130, arginine 144, glutamine 225, threonine 240, and arginine 304. Histidine 42 functions as the Proton donor in the catalytic mechanism. Position 300-306 (300-306 (ATTGRKR)) interacts with substrate. GTP contacts are provided by residues arginine 306, 332–334 (KLD), and 414–416 (STG).

It belongs to the adenylosuccinate synthetase family. In terms of assembly, homodimer. The cofactor is Mg(2+).

Its subcellular location is the cytoplasm. The enzyme catalyses IMP + L-aspartate + GTP = N(6)-(1,2-dicarboxyethyl)-AMP + GDP + phosphate + 2 H(+). It participates in purine metabolism; AMP biosynthesis via de novo pathway; AMP from IMP: step 1/2. Functionally, plays an important role in the de novo pathway of purine nucleotide biosynthesis. Catalyzes the first committed step in the biosynthesis of AMP from IMP. This is Adenylosuccinate synthetase from Teredinibacter turnerae (strain ATCC 39867 / T7901).